We begin with the raw amino-acid sequence, 660 residues long: CXXC-type zinc finger protein 1 (660 aa).

The residue at position 1 (methionine 1) is an N-acetylmethionine. Over residues 1–14 (MEGDGSDLEPPDAG) the composition is skewed to acidic residues. Residues 1 to 20 (MEGDGSDLEPPDAGDDSKSE) are disordered. Residues serine 6 and serine 19 each carry the phosphoserine modification. A PHD-type zinc finger spans residues 28 to 76 (YCICRKPDINCFMIGCDNCNEWFHGDCIRITEKMAKAIREWYCRECREK). A compositionally biased stretch (basic and acidic residues) spans 91-120 (ERDGSERAGSEPRDEGGGRKRPASDPELQR). Residues 91–166 (ERDGSERAGS…QQQQQQQQQI (76 aa)) form a disordered region. Serine 124 is modified (phosphoserine). The CXXC-type zinc-finger motif lies at 164-213 (QQIKRSARMCGECEACRRTEDCGHCDFCRDMKKFGGPNKIRQKCRLRQCQ). Zn(2+) contacts are provided by cysteine 173, cysteine 176, cysteine 179, cysteine 185, cysteine 188, cysteine 191, cysteine 207, and cysteine 212. Disordered regions lie at residues 223–287 (FPSS…SDED) and 328–375 (AVKV…DPAS). Serine 228 is modified (phosphoserine). Threonine 231 is subject to Phosphothreonine. Lysine 254 is covalently cross-linked (Glycyl lysine isopeptide (Lys-Gly) (interchain with G-Cter in SUMO2)). A compositionally biased stretch (basic residues) spans 328–338 (AVKVKHVKRRE). The span at 339–349 (KKSEKKKEERY) shows a compositional bias: basic and acidic residues. Basic residues predominate over residues 350–362 (KRHRQKQKHKDKW). A compositionally biased stretch (basic and acidic residues) spans 363–372 (KHPERADAKD). A coiled-coil region spans residues 426 to 479 (AEEHGKKLLERIRREQQSARTRLQEMERRFHELEAIILRAKQQAVREDEENNEN).

As to quaternary structure, component of the SET1 complex, at least composed of the catalytic subunit (SETD1A or SETD1B), WDR5, WDR82, RBBP5, ASH2L/ASH2, CXXC1/CFP1, HCFC1 and DPY30. Interacts with SETD1A. Interacts with ZNF335. Interacts with PRDM9; this interaction does not link PRDM9-activated recombination hotspot sites with DSB machinery and is not required for the hotspot recognition pathway. Interacts with histone H3K4me3. In terms of tissue distribution, expressed in seminiferous tubules and in both germ cells and Sertoli cells. Highly expressed in spermatogonia, weakly expressed in leptonema and zygonema, and then again high expression in pachynema and diplonema, decreasing to undetectable levels in spermatids.

The protein resides in the nucleus speckle. The protein localises to the nucleus. Transcriptional activator that exhibits a unique DNA binding specificity for CpG unmethylated motifs with a preference for CpGG. In Mus musculus (Mouse), this protein is CXXC-type zinc finger protein 1 (Cxxc1).